The primary structure comprises 824 residues: RelA-associated inhibitor (824 aa).

N-acetylmethionine is present on Met-1. Disordered regions lie at residues 48–87 (SLWSDSPAPPGAQAGVPSRMARYSTSPVPEHFGSRGSPQK) and 99–271 (RSES…YERL). Phosphoserine occurs at positions 84, 100, 102, 110, 113, 119, and 120. At Thr-123 the chain carries Phosphothreonine. The residue at position 134 (Ser-134) is a Phosphoserine. Omega-N-methylarginine occurs at positions 137, 142, 144, 160, 167, and 180. Phosphoserine occurs at positions 183, 187, and 203. An Omega-N-methylarginine modification is found at Arg-205. Thr-275 carries the post-translational modification Phosphothreonine. Ser-279 bears the Phosphoserine mark. 2 disordered regions span residues 291-370 (SLDG…RPIP) and 388-501 (RAVL…QTVP). At Thr-307 the chain carries Phosphothreonine. Ser-315, Ser-331, and Ser-338 each carry phosphoserine. Residue Thr-340 is modified to Phosphothreonine. A compositionally biased stretch (low complexity) spans 359 to 370 (QPRSTPRQRPIP). Residues 400-424 (APPPKLPPQPPPQPQMQPQPQPQPQ) show a composition bias toward pro residues. Low complexity predominate over residues 425–440 (MQPQSQAQPQTPAPQQ). 3 positions are modified to phosphoserine: Ser-522, Ser-563, and Ser-593. A disordered region spans residues 547–614 (FHRHGGPGPG…SVLRKVGSPR (68 aa)). The span at 575–597 (PPAPAPPAPIPPPAPPQSSPPEQ) shows a compositional bias: pro residues. ANK repeat units follow at residues 655 to 684 (EGITALHNAICGANYPIVDFLIAAGANVNS) and 688 to 717 (HGWTPLHCAASCNDTAICTALVQHGAAIFA). An SH3 domain is found at 754 to 816 (MHNGVVYALW…PRNYFGLFPR (63 aa)).

The protein belongs to the iASPP family. As to quaternary structure, interacts with TP63 and TP73. Interacts with RELA NF-kappa-B subunit and with SP1 via its C-terminal part. Interacts (via SH3 domain and ANK repeats) with p53/TP53; the interaction inhibits pro-apoptotic activity of p53/TP53. As to expression, most abundant in skin with high levels also found in heart, testis and stomach. In 15.5 dpc embryonic heart, expressed at higher levels in atria than ventricles.

The protein resides in the cytoplasm. It is found in the nucleus. Regulator that plays a central role in regulation of apoptosis and transcription via its interaction with NF-kappa-B and p53/TP53 proteins. Inhibits p53/TP53 function, possibly by preventing the association between p53/TP53 and ASPP1 or ASPP2, and therefore suppressing the subsequent activation of apoptosis. Is involved in NF-kappa-B dependent negative regulation of inflammatory response. The protein is RelA-associated inhibitor of Mus musculus (Mouse).